A 131-amino-acid polypeptide reads, in one-letter code: MSWQAYVDEHLMCEIEGHHLASAAILGHDGTVWAQSADFPQFKPEEITGIMKDFDEPGHLAPTGMFVATAKYMVIQGEPGAVIRGKKGAGGITIKKTGQALVVGIYDEPMTPGQCSMVVERLGDYLVKQGL.

Cys13 and Cys115 are disulfide-bonded. The Involved in PIP2 interaction signature appears at 81–97; that stretch reads AVIRGKKGAGGITIKKT. The residue at position 111 (Thr111) is a Phosphothreonine.

The protein belongs to the profilin family. As to quaternary structure, occurs in many kinds of cells as a complex with monomeric actin in a 1:1 ratio. Post-translationally, phosphorylated by MAP kinases.

The protein resides in the cytoplasm. It is found in the cytoskeleton. Functionally, binds to actin and affects the structure of the cytoskeleton. At high concentrations, profilin prevents the polymerization of actin, whereas it enhances it at low concentrations. In Phleum pratense (Common timothy), this protein is Profilin-10.